The chain runs to 427 residues: Serine hydroxymethyltransferase (427 aa).

Glycine 120–isoleucine 122 contributes to the (6S)-5,6,7,8-tetrahydrofolate binding site. N6-(pyridoxal phosphate)lysine is present on lysine 226.

It belongs to the SHMT family. Homodimer. The cofactor is pyridoxal 5'-phosphate.

The protein localises to the cytoplasm. Its pathway is amino-acid biosynthesis; glycine biosynthesis; glycine from L-serine: step 1/1. Functionally, catalyzes the reversible interconversion of serine and glycine with a modified folate serving as the one-carbon carrier. Also exhibits a pteridine-independent aldolase activity toward beta-hydroxyamino acids, producing glycine and aldehydes, via a retro-aldol mechanism. This is Serine hydroxymethyltransferase from Pyrococcus horikoshii (strain ATCC 700860 / DSM 12428 / JCM 9974 / NBRC 100139 / OT-3).